The following is a 390-amino-acid chain: Aspartate beta-hydroxylase domain-containing protein 1 (390 aa).

The segment at 1–54 is disordered; that stretch reads MKEGRGSFSVERGPRKERETAQSGMWKGNSPAGSQGAAMEGTGGELGGQGNWGP. The Cytoplasmic segment spans residues 1–72; that stretch reads MKEGRGSFSV…RASLIMLPWP (72 aa). Residues 41-51 show a composition bias toward gly residues; sequence GTGGELGGQGN. The helical transmembrane segment at 73–95 threads the bilayer; that stretch reads LPLASSALTLLFGALTSLFLWYC. Residues 96–390 are Lumenal-facing; it reads YRLGSQDMQA…ALDFVFAPDP (295 aa). The segment at 116-143 is disordered; that stretch reads RGGPVGCSEAGGPSPGGPGDPGEGPRTE. Residues 128-137 are compositionally biased toward gly residues; sequence PSPGGPGDPG. The residue at position 129 (S129) is a Phosphoserine.

This sequence belongs to the aspartyl/asparaginyl beta-hydroxylase family.

It is found in the membrane. In Homo sapiens (Human), this protein is Aspartate beta-hydroxylase domain-containing protein 1 (ASPHD1).